A 644-amino-acid chain; its full sequence is Exoribonuclease 2 (644 aa).

In terms of domain architecture, RNB spans 189 to 516; the sequence is RQDLTALNFV…NHRLLKAVIK (328 aa). The S1 motif domain occupies 561–643; sequence NTRFAAEIID…ETRSIIARPA (83 aa).

It belongs to the RNR ribonuclease family. RNase II subfamily.

The protein localises to the cytoplasm. It catalyses the reaction Exonucleolytic cleavage in the 3'- to 5'-direction to yield nucleoside 5'-phosphates.. Its function is as follows. Involved in mRNA degradation. Hydrolyzes single-stranded polyribonucleotides processively in the 3' to 5' direction. This is Exoribonuclease 2 from Salmonella choleraesuis (strain SC-B67).